The chain runs to 40 residues: Antimicrobial peptide 1 (40 aa).

Residues 1–40 (AQCGAQGGGATCPGGLCCSQWGWCGSTPKYCGAGCQSNCK) form the Chitin-binding type-1 domain. Disulfide bonds link Cys-3–Cys-18, Cys-12–Cys-24, Cys-17–Cys-31, and Cys-35–Cys-39.

In terms of processing, not glycosylated.

Antimicrobial peptide active against plant pathogenic fungi and Gram-negative and -positive bacteria. The chain is Antimicrobial peptide 1 from Fagopyrum esculentum (Common buckwheat).